The chain runs to 229 residues: Ribosome maturation factor RimM (229 aa).

Positions 1-21 (MAGHDSGNAKRGRSPSFGVFV) are disordered. The 82-residue stretch at 148–229 (ADEFYWVDLI…RVVVDWEADY (82 aa)) folds into the PRC barrel domain.

It belongs to the RimM family. Binds ribosomal protein uS19.

Its subcellular location is the cytoplasm. Functionally, an accessory protein needed during the final step in the assembly of 30S ribosomal subunit, possibly for assembly of the head region. Essential for efficient processing of 16S rRNA. May be needed both before and after RbfA during the maturation of 16S rRNA. It has affinity for free ribosomal 30S subunits but not for 70S ribosomes. The protein is Ribosome maturation factor RimM of Burkholderia mallei (strain NCTC 10247).